The following is an 805-amino-acid chain: Endonuclease MutS2 (805 aa).

344-351 (GPNGGGKT) contacts ATP. Residues 705-724 (RSRSEKLQAASEARPSAPPG) form a disordered region. Residues 729-804 (LDVRGLRVEE…GDAVTVVSLR (76 aa)) form the Smr domain.

The protein belongs to the DNA mismatch repair MutS family. MutS2 subfamily. Homodimer. Binds to stalled ribosomes, contacting rRNA.

Its function is as follows. Endonuclease that is involved in the suppression of homologous recombination and thus may have a key role in the control of bacterial genetic diversity. Functionally, acts as a ribosome collision sensor, splitting the ribosome into its 2 subunits. Detects stalled/collided 70S ribosomes which it binds and splits by an ATP-hydrolysis driven conformational change. Acts upstream of the ribosome quality control system (RQC), a ribosome-associated complex that mediates the extraction of incompletely synthesized nascent chains from stalled ribosomes and their subsequent degradation. Probably generates substrates for RQC. This is Endonuclease MutS2 from Anaeromyxobacter sp. (strain Fw109-5).